We begin with the raw amino-acid sequence, 391 residues long: Pectin acetylesterase 11 (391 aa).

The N-terminal stretch at 1–23 (MTWLKQMWSSILVLAVVVIGARA) is a signal peptide. Residues Ser-171, Asp-267, and His-334 each act as charge relay system in the active site.

This sequence belongs to the pectinacetylesterase family.

The protein resides in the secreted. Its subcellular location is the cell wall. Hydrolyzes acetyl esters in homogalacturonan regions of pectin. In type I primary cell wall, galacturonic acid residues of pectin can be acetylated at the O-2 and O-3 positions. Decreasing the degree of acetylation of pectin gels in vitro alters their physical properties. This Arabidopsis thaliana (Mouse-ear cress) protein is Pectin acetylesterase 11.